Consider the following 398-residue polypeptide: 1-deoxy-D-xylulose 5-phosphate reductoisomerase (398 aa).

NADPH-binding residues include Thr10, Gly11, Ser12, Ile13, Gly36, Asn38, and Asn124. Lys125 serves as a coordination point for 1-deoxy-D-xylulose 5-phosphate. Glu126 is a binding site for NADPH. Mn(2+) is bound at residue Asp150. 1-deoxy-D-xylulose 5-phosphate is bound by residues Ser151, Glu152, Ser186, and His209. Glu152 contributes to the Mn(2+) binding site. NADPH is bound at residue Gly215. 4 residues coordinate 1-deoxy-D-xylulose 5-phosphate: Ser222, Asn227, Lys228, and Glu231. Residue Glu231 participates in Mn(2+) binding.

It belongs to the DXR family. In terms of assembly, homodimer. Requires Mg(2+) as cofactor. The cofactor is Mn(2+).

It catalyses the reaction 2-C-methyl-D-erythritol 4-phosphate + NADP(+) = 1-deoxy-D-xylulose 5-phosphate + NADPH + H(+). It functions in the pathway isoprenoid biosynthesis; isopentenyl diphosphate biosynthesis via DXP pathway; isopentenyl diphosphate from 1-deoxy-D-xylulose 5-phosphate: step 1/6. Functionally, catalyzes the NADPH-dependent rearrangement and reduction of 1-deoxy-D-xylulose-5-phosphate (DXP) to 2-C-methyl-D-erythritol 4-phosphate (MEP). This Pectobacterium atrosepticum (strain SCRI 1043 / ATCC BAA-672) (Erwinia carotovora subsp. atroseptica) protein is 1-deoxy-D-xylulose 5-phosphate reductoisomerase.